A 204-amino-acid polypeptide reads, in one-letter code: Large ribosomal subunit protein uL4 (204 aa).

Residues 48-75 (HTKGRSDVSGGGKKPWRQKGRGGARAGS) are disordered.

The protein belongs to the universal ribosomal protein uL4 family. Part of the 50S ribosomal subunit.

In terms of biological role, one of the primary rRNA binding proteins, this protein initially binds near the 5'-end of the 23S rRNA. It is important during the early stages of 50S assembly. It makes multiple contacts with different domains of the 23S rRNA in the assembled 50S subunit and ribosome. Forms part of the polypeptide exit tunnel. In Campylobacter fetus subsp. fetus (strain 82-40), this protein is Large ribosomal subunit protein uL4.